The following is a 237-amino-acid chain: Protein PetR (237 aa).

One can recognise a Response regulatory domain in the interval 8 to 121 (HLLIVDDDER…ELLLRINAIL (114 aa)). The residue at position 57 (aspartate 57) is a 4-aspartylphosphate. Residues 77–95 (ATPILLLTARGETRERIEG) constitute a DNA-binding region (H-T-H motif). Positions 132–236 (PKYLSLGPLR…VRGLGYMLAP (105 aa)) form a DNA-binding region, ompR/PhoB-type.

Necessary for photosynthetic and respiratory growth. Probable promoter-specific protein mediating the interaction between DNA and RNA polymerase. The sequence is that of Protein PetR (petR) from Rhodobacter capsulatus (strain ATCC BAA-309 / NBRC 16581 / SB1003).